We begin with the raw amino-acid sequence, 249 residues long: Tumor necrosis factor ligand superfamily member 12 (249 aa).

The Cytoplasmic portion of the chain corresponds to 1-21 (MAARRSQRRRGRRGEPGTALL). The chain crosses the membrane as a helical; Signal-anchor for type II membrane protein span at residues 22–45 (APLVLSLGLALACLGLLLVVVSLG). At 46–249 (SWATLSAQEP…LTYFGLFQVH (204 aa)) the chain is on the extracellular side. The segment at 52-78 (AQEPSQEELTAEDRREPPELNPQTEES) is disordered. A THD domain is found at 107-248 (IAAHYEVHPR…FLTYFGLFQV (142 aa)). Asn-139 carries N-linked (GlcNAc...) asparagine glycosylation. Cys-191 and Cys-210 are joined by a disulfide.

This sequence belongs to the tumor necrosis factor family. In terms of assembly, homotrimer. Interacts with the angiogenic factor AGGF1/VG5Q. In terms of processing, the soluble form is produced from the membrane form by proteolytic processing. Widely expressed.

The protein localises to the cell membrane. It localises to the secreted. In terms of biological role, binds to FN14 and possibly also to TNRFSF12/APO3. Weak inducer of apoptosis in some cell types. Mediates NF-kappa-B activation. Promotes angiogenesis and the proliferation of endothelial cells. Also involved in induction of inflammatory cytokines. Promotes IL8 secretion. The chain is Tumor necrosis factor ligand superfamily member 12 (Tnfsf12) from Mus musculus (Mouse).